Reading from the N-terminus, the 369-residue chain is 4-hydroxy-3-methylbut-2-en-1-yl diphosphate synthase (flavodoxin) (369 aa).

4 residues coordinate [4Fe-4S] cluster: cysteine 270, cysteine 273, cysteine 305, and glutamate 312.

Belongs to the IspG family. Requires [4Fe-4S] cluster as cofactor.

It catalyses the reaction (2E)-4-hydroxy-3-methylbut-2-enyl diphosphate + oxidized [flavodoxin] + H2O + 2 H(+) = 2-C-methyl-D-erythritol 2,4-cyclic diphosphate + reduced [flavodoxin]. Its pathway is isoprenoid biosynthesis; isopentenyl diphosphate biosynthesis via DXP pathway; isopentenyl diphosphate from 1-deoxy-D-xylulose 5-phosphate: step 5/6. Its function is as follows. Converts 2C-methyl-D-erythritol 2,4-cyclodiphosphate (ME-2,4cPP) into 1-hydroxy-2-methyl-2-(E)-butenyl 4-diphosphate. In Pseudomonas putida (strain ATCC 47054 / DSM 6125 / CFBP 8728 / NCIMB 11950 / KT2440), this protein is 4-hydroxy-3-methylbut-2-en-1-yl diphosphate synthase (flavodoxin).